Consider the following 204-residue polypeptide: uncharacterized protein (204 aa).

Over residues 1 to 10 (MQQAITQQEK) the composition is skewed to polar residues. 2 disordered regions span residues 1–20 (MQQA…LPNR) and 70–99 (DEAR…KNTE). The SPOR domain occupies 131–204 (VRDSKKFGLQ…TVTDCVVIGM (74 aa)).

This sequence to E.coli FtsN repeat regions.

This is an uncharacterized protein from Haemophilus influenzae (strain ATCC 51907 / DSM 11121 / KW20 / Rd).